A 117-amino-acid polypeptide reads, in one-letter code: Large ribosomal subunit protein bL19 (117 aa).

It belongs to the bacterial ribosomal protein bL19 family.

This protein is located at the 30S-50S ribosomal subunit interface and may play a role in the structure and function of the aminoacyl-tRNA binding site. In Shewanella pealeana (strain ATCC 700345 / ANG-SQ1), this protein is Large ribosomal subunit protein bL19.